We begin with the raw amino-acid sequence, 70 residues long: ATP synthase subunit c (70 aa).

The next 2 membrane-spanning stretches (helical) occupy residues 3–23 (ALAA…IGIA) and 44–64 (LFFI…VIAI).

The protein belongs to the ATPase C chain family. In terms of assembly, F-type ATPases have 2 components, F(1) - the catalytic core - and F(0) - the membrane proton channel. F(1) has five subunits: alpha(3), beta(3), gamma(1), delta(1), epsilon(1). F(0) has three main subunits: a(1), b(2) and c(10-14). The alpha and beta chains form an alternating ring which encloses part of the gamma chain. F(1) is attached to F(0) by a central stalk formed by the gamma and epsilon chains, while a peripheral stalk is formed by the delta and b chains.

The protein localises to the cell membrane. Its function is as follows. F(1)F(0) ATP synthase produces ATP from ADP in the presence of a proton or sodium gradient. F-type ATPases consist of two structural domains, F(1) containing the extramembraneous catalytic core and F(0) containing the membrane proton channel, linked together by a central stalk and a peripheral stalk. During catalysis, ATP synthesis in the catalytic domain of F(1) is coupled via a rotary mechanism of the central stalk subunits to proton translocation. Key component of the F(0) channel; it plays a direct role in translocation across the membrane. A homomeric c-ring of between 10-14 subunits forms the central stalk rotor element with the F(1) delta and epsilon subunits. The sequence is that of ATP synthase subunit c from Caldicellulosiruptor saccharolyticus (strain ATCC 43494 / DSM 8903 / Tp8T 6331).